The chain runs to 416 residues: MAFLILVTLALASAHYSGEHFEGEKVFRVNVEDENHINLLHTLASTTQIDFWKPDSVTQIKPHSTADFRVKAEDILTVEDFLKQNELHYEVLINNLRLVLEGQFGRQVPATGHSYEKYNRWETIEAWTQQVTSENPDLISRRSIGTTFEGRTIYLLKVGKAGQNKPAIFMDCGFHAREWISPAFWQWFVREXIRTYGQEIHMTELLDKLDFYVLPVGNIDGYVYTWTKNRMWRKTRSTQVGTNCVGTDPTRNFDAGWCKIGASRNPCDETYCGPAAESEKETKALANFIRSNLSSIKAYLTIHSYSQMMLYPYSYDYKLTENNAELNALAKATVKELATLHGTKYTYGPGATTIYPAAGGSDDWAYDQGIKYSFTFELRDKGRYGFALPESQISPTCEETLLAIKHLARYVLQHLY.

The signal sequence occupies residues Met1–His15. The propeptide at Tyr16 to Pro109 is activation peptide. Positions Lys117–Val411 constitute a Peptidase M14 domain. Zn(2+)-binding residues include His175 and Glu178. Residues His175–Glu178, Arg233, and Thr250–Arg251 contribute to the substrate site. 2 disulfide bridges follow: Cys244–Cys267 and Cys258–Cys272. His303 is a binding site for Zn(2+). Substrate-binding positions include Ser304–Tyr305 and Tyr355. Catalysis depends on Glu377, which acts as the Proton donor/acceptor.

The protein belongs to the peptidase M14 family. It depends on Zn(2+) as a cofactor.

It localises to the secreted. Its subcellular location is the zymogen granule lumen. It catalyses the reaction Preferential release of a C-terminal lysine or arginine amino acid.. This is Carboxypeptidase B (CPB1) from Canis lupus familiaris (Dog).